We begin with the raw amino-acid sequence, 865 residues long: Ribosome biogenesis protein BOP1 homolog (865 aa).

Disordered stretches follow at residues 1 to 195 (MVAN…LKLG) and 207 to 240 (KTRGLGVFPPVPKRKGKAAQDEYAAGDTSDEEDI). Composition is skewed to acidic residues over residues 30–44 (LDESNDEDNSNESDY), 57–79 (NEGEDSSDSDGEYATDDDEDDVL), and 87–159 (DGEE…EEEA). The segment covering 160–180 (KENGKEKPAKAKAERKQREEQ) has biased composition (basic and acidic residues). WD repeat units follow at residues 526-565 (GHTSLIRCISVEPKGEYIVTGSDDMTVKIWEISTARCIRT), 567-607 (PTGD…YMLV), 651-693 (THFR…SQVP), 696-734 (KSKGLIQCVLFHPIKPCLFVATQRHIRVYDLVKQLMMKK), 737-776 (PGCKWISSMAIHPKGDNLLIGTYEKRLMWFDLDLSTKPYQ), 780-819 (IHNAAIRSVAFHPRYPLFASAGDDRSVIVSHGMVYNDLLQ), and 835-865 (VNDFSVFDVVFHPTQPWVFSSGADNTVRLYT).

The protein belongs to the WD repeat BOP1/ERB1 family.

It is found in the nucleus. It localises to the nucleolus. Its subcellular location is the nucleoplasm. In terms of biological role, required for maturation of ribosomal RNAs and formation of the large ribosomal subunit. The chain is Ribosome biogenesis protein BOP1 homolog from Anopheles gambiae (African malaria mosquito).